Consider the following 388-residue polypeptide: Protein-glutamate methylesterase/protein-glutamine glutaminase (388 aa).

A Response regulatory domain is found at 20–138 (RVMVVDDSVV…ESAGAEVFRH (119 aa)). At Asp71 the chain carries 4-aspartylphosphate. Residues 193–386 (PTAPRVLLIG…PKLVRLFSGD (194 aa)) form the CheB-type methylesterase domain. Catalysis depends on residues Ser204, His232, and Asp328.

It belongs to the CheB family. In terms of processing, phosphorylated by CheA. Phosphorylation of the N-terminal regulatory domain activates the methylesterase activity.

It localises to the cytoplasm. The enzyme catalyses [protein]-L-glutamate 5-O-methyl ester + H2O = L-glutamyl-[protein] + methanol + H(+). It catalyses the reaction L-glutaminyl-[protein] + H2O = L-glutamyl-[protein] + NH4(+). Its function is as follows. Involved in chemotaxis. Part of a chemotaxis signal transduction system that modulates chemotaxis in response to various stimuli. Catalyzes the demethylation of specific methylglutamate residues introduced into the chemoreceptors (methyl-accepting chemotaxis proteins or MCP) by CheR. Also mediates the irreversible deamidation of specific glutamine residues to glutamic acid. This Rhodopseudomonas palustris (strain HaA2) protein is Protein-glutamate methylesterase/protein-glutamine glutaminase.